The following is a 287-amino-acid chain: Protein HEXIM2 (287 aa).

Disordered stretches follow at residues 1–212 and 266–287; these read MKDW…RSKE and RLRQ…QPGS. Residue Ser31 is modified to Phosphoserine. 2 positions are modified to phosphothreonine: Thr34 and Thr48. Phosphoserine occurs at positions 53, 55, 73, 78, and 83. Residues 89-105 are compositionally biased toward basic residues; that stretch reads ARKKHRRRPSKRKRHWR. The segment covering 115 to 134 has biased composition (basic and acidic residues); that stretch reads KQQRDERQSQRASRVREEMF. The interaction with P-TEFb stretch occupies residues 142–145; that stretch reads PYNT. Composition is skewed to basic and acidic residues over residues 181–212 and 266–280; these read GQGR…RSKE and RLRQ…EGGR. Residues 208–278 adopt a coiled-coil conformation; it reads GRSKEELVRD…QENEMWNREG (71 aa). Positions 227–287 are interaction with CCNT1, HEXIM1 and HEXIM2; that stretch reads QAEEEMRRLR…GGRRGGQPGS (61 aa).

The protein belongs to the HEXIM family. Homooligomer and heterooligomer with HEXIM1; probably dimeric. Core component of the 7SK RNP complex, at least composed of 7SK RNA, LARP7, MEPCE, HEXIM1 (or HEXIM2) and P-TEFb (composed of CDK9 and CCNT1/cyclin-T1). Interacts with CCNT2.

It is found in the nucleus. Functionally, transcriptional regulator which functions as a general RNA polymerase II transcription inhibitor. Core component of the 7SK RNP complex: in cooperation with 7SK snRNA sequesters P-TEFb in a large inactive 7SK snRNP complex preventing RNA polymerase II phosphorylation and subsequent transcriptional elongation. This is Protein HEXIM2 (HEXIM2) from Bos taurus (Bovine).